A 279-amino-acid chain; its full sequence is Thymidylate synthase (279 aa).

133-134 (RR) contributes to the dUMP binding site. The active-site Nucleophile is the C154. DUMP-binding positions include 178 to 181 (RSND), N189, and 219 to 221 (HIY). D181 is a binding site for (6R)-5,10-methylene-5,6,7,8-tetrahydrofolate. Residue A278 participates in (6R)-5,10-methylene-5,6,7,8-tetrahydrofolate binding.

Belongs to the thymidylate synthase family. Bacterial-type ThyA subfamily. Homodimer.

It is found in the cytoplasm. It catalyses the reaction dUMP + (6R)-5,10-methylene-5,6,7,8-tetrahydrofolate = 7,8-dihydrofolate + dTMP. It functions in the pathway pyrimidine metabolism; dTTP biosynthesis. Functionally, catalyzes the reductive methylation of 2'-deoxyuridine-5'-monophosphate (dUMP) to 2'-deoxythymidine-5'-monophosphate (dTMP) while utilizing 5,10-methylenetetrahydrofolate (mTHF) as the methyl donor and reductant in the reaction, yielding dihydrofolate (DHF) as a by-product. This enzymatic reaction provides an intracellular de novo source of dTMP, an essential precursor for DNA biosynthesis. This is Thymidylate synthase from Streptococcus pyogenes serotype M3 (strain SSI-1).